The primary structure comprises 131 residues: Large ribosomal subunit protein bL12 (131 aa).

The protein belongs to the bacterial ribosomal protein bL12 family. Homodimer. Part of the ribosomal stalk of the 50S ribosomal subunit. Forms a multimeric L10(L12)X complex, where L10 forms an elongated spine to which 2 to 4 L12 dimers bind in a sequential fashion. Binds GTP-bound translation factors.

Forms part of the ribosomal stalk which helps the ribosome interact with GTP-bound translation factors. Is thus essential for accurate translation. This is Large ribosomal subunit protein bL12 from Prochlorococcus marinus (strain NATL2A).